A 385-amino-acid polypeptide reads, in one-letter code: MADSCRNLTYVRDSVGPATSTLMFVAGVVGNGLALGILGARRHSRPSAFAVLVTGLGVTDLLGTCFLSPAVFAAYARNSSLLGLARGRPALCDAFAFAMTFFGLASTLILFAMAVERCLALSHPYLYAQLDGPRRARLALPAIYAFCTIFCSLPFLGLGQHQQYCPGSWCFIRMRSAEPGGCAFLLAYASLVALLVAAIVLCNGSVTLSLCRMYRQQRRHQARCPRPRAGEDEVDHLILLALMTGIMAVCSLPLTPQIRGFTQAIAPDSSEMGDLLAFRFNAFNPILDPWVFILFRKSVFQRLKLWFCCLYSRPAQGDSRTSLSQSASGRKDSSAPPALEGKKGNWVPLSAWGEGQGGPLPAVQLPTSTVGTPSKAGSEAACSLC.

Residues 1 to 16 (MADSCRNLTYVRDSVG) lie on the Extracellular side of the membrane. Disulfide bonds link cysteine 5/cysteine 165 and cysteine 92/cysteine 170. The N-linked (GlcNAc...) asparagine glycan is linked to asparagine 7. Residues 17–38 (PATSTLMFVAGVVGNGLALGIL) traverse the membrane as a helical segment. The Cytoplasmic segment spans residues 39 to 51 (GARRHSRPSAFAV). The helical transmembrane segment at 52-76 (LVTGLGVTDLLGTCFLSPAVFAAYA) threads the bilayer. At 77-94 (RNSSLLGLARGRPALCDA) the chain is on the extracellular side. Residues 95 to 115 (FAFAMTFFGLASTLILFAMAV) traverse the membrane as a helical segment. At 116–134 (ERCLALSHPYLYAQLDGPR) the chain is on the cytoplasmic side. The chain crosses the membrane as a helical span at residues 135 to 158 (RARLALPAIYAFCTIFCSLPFLGL). At 159 to 181 (GQHQQYCPGSWCFIRMRSAEPGG) the chain is on the extracellular side. The chain crosses the membrane as a helical span at residues 182-208 (CAFLLAYASLVALLVAAIVLCNGSVTL). The Cytoplasmic segment spans residues 209 to 234 (SLCRMYRQQRRHQARCPRPRAGEDEV). A helical transmembrane segment spans residues 235 to 259 (DHLILLALMTGIMAVCSLPLTPQIR). The Extracellular portion of the chain corresponds to 260-273 (GFTQAIAPDSSEMG). A helical membrane pass occupies residues 274 to 294 (DLLAFRFNAFNPILDPWVFIL). Residues 295–385 (FRKSVFQRLK…AGSEAACSLC (91 aa)) are Cytoplasmic-facing. The interval 315–344 (AQGDSRTSLSQSASGRKDSSAPPALEGKKG) is disordered. The span at 318–328 (DSRTSLSQSAS) shows a compositional bias: polar residues. Cysteine 382 is subject to Cysteine methyl ester. Cysteine 382 carries the S-farnesyl cysteine lipid modification. Residues 383-385 (SLC) constitute a propeptide, removed in mature form.

It belongs to the G-protein coupled receptor 1 family. Interacts (non-isoprenylated C-terminus) with PDZK1. Isoprenylation does not influence ligand binding but is required for efficient coupling to the effectors adenylyl cyclase and phospholipase C.

The protein localises to the cell membrane. Its function is as follows. Receptor for prostacyclin (prostaglandin I2 or PGI2). The activity of this receptor is mediated by G(s) proteins which activate adenylate cyclase. This is Prostacyclin receptor (PTGIR) from Bos taurus (Bovine).